We begin with the raw amino-acid sequence, 624 residues long: Bifunctional 3'-phosphoadenosine 5'-phosphosulfate synthase 1 (624 aa).

Methionine 1 carries the N-acetylmethionine modification. The segment at 1-225 (MEIPGSLCKK…VVELLQERDI (225 aa)) is adenylyl-sulfate kinase. Lysine 12 carries the post-translational modification N6-acetyllysine. Residue 62-67 (GAGKTT) participates in ATP binding. Residues 89–92 (DNIR), phenylalanine 101, 106–109 (REEN), 132–133 (IS), lysine 171, and 184–185 (GF) each bind adenosine 5'-phosphosulfate. ATP contacts are provided by residues cysteine 207, cysteine 212, 419-422 (QLRN), 521-525 (GRDPA), and alanine 563. Residues 234–624 (VKELYVPENK…TEYYKSLEKA (391 aa)) form a sulfate adenylyltransferase region.

It in the N-terminal section; belongs to the APS kinase family. This sequence in the C-terminal section; belongs to the sulfate adenylyltransferase family. Homodimer. In terms of tissue distribution, expressed in testis, pancreas, kidney, thymus, prostate, ovary, small intestine, colon, leukocytes and liver. Also expressed in high endothelial venules (HEV) cells and in cartilage.

The enzyme catalyses sulfate + ATP + H(+) = adenosine 5'-phosphosulfate + diphosphate. The catalysed reaction is adenosine 5'-phosphosulfate + ATP = 3'-phosphoadenylyl sulfate + ADP + H(+). It functions in the pathway sulfur metabolism; sulfate assimilation. Its activity is regulated as follows. Inhibited by chlorate. The kinase activity is subject to inhibition by the substrate adenylyl sulfate. Functionally, bifunctional enzyme with both ATP sulfurylase and APS kinase activity, which mediates two steps in the sulfate activation pathway. The first step is the transfer of a sulfate group to ATP to yield adenosine 5'-phosphosulfate (APS), and the second step is the transfer of a phosphate group from ATP to APS yielding 3'-phosphoadenylylsulfate (PAPS: activated sulfate donor used by sulfotransferase). In mammals, PAPS is the sole source of sulfate; APS appears to be only an intermediate in the sulfate-activation pathway. Required for normal biosynthesis of sulfated L-selectin ligands in endothelial cells. This is Bifunctional 3'-phosphoadenosine 5'-phosphosulfate synthase 1 (PAPSS1) from Homo sapiens (Human).